Consider the following 158-residue polypeptide: Cyclic pyranopterin monophosphate synthase (158 aa).

Substrate-binding positions include 76 to 78 (LCH) and 114 to 115 (ME). Asp129 is an active-site residue.

The protein belongs to the MoaC family. As to quaternary structure, homohexamer; trimer of dimers.

It carries out the reaction (8S)-3',8-cyclo-7,8-dihydroguanosine 5'-triphosphate = cyclic pyranopterin phosphate + diphosphate. Its pathway is cofactor biosynthesis; molybdopterin biosynthesis. Catalyzes the conversion of (8S)-3',8-cyclo-7,8-dihydroguanosine 5'-triphosphate to cyclic pyranopterin monophosphate (cPMP). This chain is Cyclic pyranopterin monophosphate synthase, found in Shewanella frigidimarina (strain NCIMB 400).